Reading from the N-terminus, the 248-residue chain is 1-(5-phosphoribosyl)-5-[(5-phosphoribosylamino)methylideneamino] imidazole-4-carboxamide isomerase (248 aa).

Residue D8 is the Proton acceptor of the active site. D131 acts as the Proton donor in catalysis.

This sequence belongs to the HisA/HisF family.

The protein localises to the cytoplasm. It catalyses the reaction 1-(5-phospho-beta-D-ribosyl)-5-[(5-phospho-beta-D-ribosylamino)methylideneamino]imidazole-4-carboxamide = 5-[(5-phospho-1-deoxy-D-ribulos-1-ylimino)methylamino]-1-(5-phospho-beta-D-ribosyl)imidazole-4-carboxamide. The protein operates within amino-acid biosynthesis; L-histidine biosynthesis; L-histidine from 5-phospho-alpha-D-ribose 1-diphosphate: step 4/9. The sequence is that of 1-(5-phosphoribosyl)-5-[(5-phosphoribosylamino)methylideneamino] imidazole-4-carboxamide isomerase from Paracidovorax citrulli (strain AAC00-1) (Acidovorax citrulli).